The chain runs to 283 residues: Phosphate import ATP-binding protein PstB 1 (283 aa).

The span at 1–16 shows a compositional bias: acidic residues; it reads MSSDDTTDPTADDESF. Residues 1-35 form a disordered region; the sequence is MSSDDTTDPTADDESFTDSPVAGLEQSTTTRGSGR. Residues 38–278 form the ABC transporter domain; the sequence is ISARNINVWY…PSSERVENYI (241 aa). Residue 70–77 participates in ATP binding; sequence GPSGCGKS.

It belongs to the ABC transporter superfamily. Phosphate importer (TC 3.A.1.7) family. As to quaternary structure, the complex is composed of two ATP-binding proteins (PstB), two transmembrane proteins (PstC and PstA) and a solute-binding protein (PstS).

It localises to the cell membrane. It carries out the reaction phosphate(out) + ATP + H2O = ADP + 2 phosphate(in) + H(+). Part of the ABC transporter complex PstSACB involved in phosphate import. Responsible for energy coupling to the transport system. This is Phosphate import ATP-binding protein PstB 1 from Natronomonas pharaonis (strain ATCC 35678 / DSM 2160 / CIP 103997 / JCM 8858 / NBRC 14720 / NCIMB 2260 / Gabara) (Halobacterium pharaonis).